Reading from the N-terminus, the 120-residue chain is Basic phospholipase A2 Cc2-PLA2 (120 aa).

7 cysteine pairs are disulfide-bonded: Cys26–Cys113, Cys28–Cys44, Cys43–Cys95, Cys49–Cys120, Cys50–Cys88, Cys57–Cys81, and Cys75–Cys86. The Ca(2+) site is built by Tyr27, Gly29, and Gly31. His47 is an active-site residue. Asp48 lines the Ca(2+) pocket. The active site involves Asp89.

It belongs to the phospholipase A2 family. Group II subfamily. D49 sub-subfamily. Monomer. It depends on Ca(2+) as a cofactor. Expressed by the venom gland.

Its subcellular location is the secreted. The enzyme catalyses a 1,2-diacyl-sn-glycero-3-phosphocholine + H2O = a 1-acyl-sn-glycero-3-phosphocholine + a fatty acid + H(+). Functionally, basic phospholipase A2 that inhibits ADP-, thrombin- and arachidonic acid-induced platelet aggregation. It also exhibits anticoagulant effects upon human plasma in vitro. It induces a high hemolytic activity reaching its maximum after 24 hours. It induces a marked elevation of plasmatic levels of interleukin-6 and -10, eosinophil peroxidase and complement lytic activities and it also provokes a drastic increase of lymphocytes, monocytes and neutrophils in peripheral blood accompanied by a rapid intense migration of neutrophils to the peritoneal cavity. PLA2 catalyzes the calcium-dependent hydrolysis of the 2-acyl groups in 3-sn-phosphoglycerides. This Cerastes cerastes (Horned desert viper) protein is Basic phospholipase A2 Cc2-PLA2.